The following is a 252-amino-acid chain: Phosphate import ATP-binding protein PstB (252 aa).

The region spanning 5 to 247 (MRGQDVKVFY…PKEQRTQDYI (243 aa)) is the ABC transporter domain. Residue 37-44 (GPSGCGKS) participates in ATP binding.

Belongs to the ABC transporter superfamily. Phosphate importer (TC 3.A.1.7) family. The complex is composed of two ATP-binding proteins (PstB), two transmembrane proteins (PstC and PstA) and a solute-binding protein (PstS).

Its subcellular location is the cell inner membrane. The catalysed reaction is phosphate(out) + ATP + H2O = ADP + 2 phosphate(in) + H(+). Its function is as follows. Part of the ABC transporter complex PstSACB involved in phosphate import. Responsible for energy coupling to the transport system. The polypeptide is Phosphate import ATP-binding protein PstB (Bartonella quintana (strain Toulouse) (Rochalimaea quintana)).